Here is a 403-residue protein sequence, read N- to C-terminus: MFGHFKLVYPAPISEPIQSRDSNAYMMETLRNSGLNLKNDFGIGRKIWRVFSFTYNMVILPVSFPINYVIHLAEFPPELLLQSLQLCLNTWCFALKFFTLIVYTHRLELANKHFDELDKYCVKPAEKRKVRDMVATITRLYLTFVVVYVLYATSTLLDGLLHHRVPYNTYYPFINWRVDRTQMYIQSFLEYFTVGYAIYVATATDSYPVIYVAALRTHILLLKDRIIYLGDPSNEGSSDPSYMFKSLVDCIKAHRTMLNFCDAIQPIISGTIFAQFIICGSILGIIMINMVLFADQSTRFGIVIYVMAVLLQTFPLCFYCNAIVDDCKELAHALFHSAWWVQDKRYQRTVIQFLQKLQQPMTFTAMNIFNINLATNINVAKFAFTVYAIASGMNLDQKLSIKE.

At 1-49 (MFGHFKLVYPAPISEPIQSRDSNAYMMETLRNSGLNLKNDFGIGRKIWR) the chain is on the cytoplasmic side. Residues 50-70 (VFSFTYNMVILPVSFPINYVI) form a helical membrane-spanning segment. Over 71–83 (HLAEFPPELLLQS) the chain is Extracellular. Residues 84-104 (LQLCLNTWCFALKFFTLIVYT) form a helical membrane-spanning segment. Residues 105-139 (HRLELANKHFDELDKYCVKPAEKRKVRDMVATITR) lie on the Cytoplasmic side of the membrane. A helical transmembrane segment spans residues 140-160 (LYLTFVVVYVLYATSTLLDGL). Topologically, residues 161-193 (LHHRVPYNTYYPFINWRVDRTQMYIQSFLEYFT) are extracellular. A helical membrane pass occupies residues 194–214 (VGYAIYVATATDSYPVIYVAA). Topologically, residues 215–271 (LRTHILLLKDRIIYLGDPSNEGSSDPSYMFKSLVDCIKAHRTMLNFCDAIQPIISGT) are cytoplasmic. A helical membrane pass occupies residues 272–292 (IFAQFIICGSILGIIMINMVL). Over 293 to 299 (FADQSTR) the chain is Extracellular. A helical membrane pass occupies residues 300–320 (FGIVIYVMAVLLQTFPLCFYC). At 321 to 372 (NAIVDDCKELAHALFHSAWWVQDKRYQRTVIQFLQKLQQPMTFTAMNIFNIN) the chain is on the cytoplasmic side. A helical membrane pass occupies residues 373–393 (LATNINVAKFAFTVYAIASGM). The Extracellular segment spans residues 394–403 (NLDQKLSIKE).

The protein belongs to the insect chemoreceptor superfamily. Heteromeric odorant receptor channel (TC 1.A.69) family. Or2a subfamily. Interacts with Orco. Complexes exist early in the endomembrane system in olfactory sensory neurons (OSNs), coupling these complexes to the conserved ciliary trafficking pathway. As to expression, expressed in 16 olfactory receptor neurons in a broad area across the antenna, including both anterior and posterior faces and in the maxillary palp. This expression pattern matches the distribution of the small sensilla basiconica. Expression in the antenna is observed late in antennal development at 93 hours APF.

It is found in the cell membrane. Its function is as follows. Odorant receptor which mediates acceptance or avoidance behavior, depending on its substrates. The odorant receptor repertoire encodes a large collection of odor stimuli that vary widely in identity, intensity, and duration. May form a complex with Orco to form odorant-sensing units, providing sensitive and prolonged odorant signaling and calcium permeability. The protein is Odorant receptor 43b (Or43b) of Drosophila melanogaster (Fruit fly).